The following is a 264-amino-acid chain: Carbonic anhydrase 7 (264 aa).

The Alpha-carbonic anhydrase domain maps to 5–262 (HGWGYGQDDG…LKGRVVKASF (258 aa)). Histidine 66 acts as the Proton donor/acceptor in catalysis. Zn(2+) is bound by residues histidine 96, histidine 98, and histidine 121. Position 201-202 (201-202 (TT)) interacts with substrate.

Belongs to the alpha-carbonic anhydrase family. Requires Zn(2+) as cofactor.

It is found in the cytoplasm. The enzyme catalyses hydrogencarbonate + H(+) = CO2 + H2O. With respect to regulation, activated by histamine, L-adrenaline, L- and D-histidine, and L- and D-phenylalanine. Inhibited by coumarins, sulfonamide derivatives such as acetazolamide (AZA), by saccharin and Foscarnet (phosphonoformate trisodium salt). Its function is as follows. Reversible hydration of carbon dioxide. The sequence is that of Carbonic anhydrase 7 (CA7) from Homo sapiens (Human).